The chain runs to 165 residues: MMATYEGRYTDAQALRIAVVVARFNDLVTGKLLSGCLDCLARHGVDTSSNSDQLDVAWVPGAFELPIVTQTLALSGQYEVVITLGAVIRGDTPHFDVVVAEASKGIASVSRETGVPVIFGVLTTDTMQQALERAGIKSNLGWSYGLQALEMGSLMGVLRSATSAS.

5-amino-6-(D-ribitylamino)uracil is bound by residues Phe24, 62-64 (AFE), and 86-88 (AVI). 91–92 (DT) is a (2S)-2-hydroxy-3-oxobutyl phosphate binding site. His94 (proton donor) is an active-site residue. Residue Phe119 coordinates 5-amino-6-(D-ribitylamino)uracil. A (2S)-2-hydroxy-3-oxobutyl phosphate-binding site is contributed by Arg133.

It belongs to the DMRL synthase family.

The enzyme catalyses (2S)-2-hydroxy-3-oxobutyl phosphate + 5-amino-6-(D-ribitylamino)uracil = 6,7-dimethyl-8-(1-D-ribityl)lumazine + phosphate + 2 H2O + H(+). The protein operates within cofactor biosynthesis; riboflavin biosynthesis; riboflavin from 2-hydroxy-3-oxobutyl phosphate and 5-amino-6-(D-ribitylamino)uracil: step 1/2. Functionally, catalyzes the formation of 6,7-dimethyl-8-ribityllumazine by condensation of 5-amino-6-(D-ribitylamino)uracil with 3,4-dihydroxy-2-butanone 4-phosphate. This is the penultimate step in the biosynthesis of riboflavin. The polypeptide is 6,7-dimethyl-8-ribityllumazine synthase (Prochlorococcus marinus (strain MIT 9303)).